We begin with the raw amino-acid sequence, 331 residues long: Proline-rich protein 33 (331 aa).

3 disordered regions span residues 1–112 (MGPQ…SVPR), 128–185 (SLES…PKVA), and 204–247 (APEP…APAS). A compositionally biased stretch (pro residues) spans 94–105 (PEEPPVPRPPPG). A compositionally biased stretch (low complexity) spans 149–169 (PPMAGPAAEAERVSSPAWASS). A compositionally biased stretch (pro residues) spans 170 to 185 (PTPPSGPHPCPVPKVA). A compositionally biased stretch (low complexity) spans 217-238 (EPEVPTPTEQEVPAPTEQEVPA).

In Homo sapiens (Human), this protein is Proline-rich protein 33 (PRR33).